Consider the following 635-residue polypeptide: Sodium-dependent multivitamin transporter (635 aa).

The next 3 membrane-spanning stretches (helical) occupy residues 24–44 (FSIM…AIGL), 68–88 (CLPV…ILGV), and 101–121 (FLGC…IPVF). Residue asparagine 138 is glycosylated (N-linked (GlcNAc...) asparagine). Transmembrane regions (helical) follow at residues 143–163 (VCGT…VLYA), 176–196 (LWLS…LGGL), 199–219 (VIWT…AVII), 256–276 (FWTL…VNQA), 297–317 (VFPF…VMFA), 336–356 (FVLY…GLFI), 396–416 (IMLS…MAYI), 428–448 (ISIF…GMFF), and 456–476 (AVVG…GSIV). N-linked (GlcNAc...) asparagine glycosylation is found at asparagine 489 and asparagine 498. Residues 528-548 (LWYSAHNSTTVIVVGLIVSLL) traverse the membrane as a helical segment.

Belongs to the sodium:solute symporter (SSF) (TC 2.A.21) family. In terms of assembly, interacts with PDZD11. In terms of processing, may be glycosylated. Expressed in microvessels of the brain (at protein level). Expressed in heart, brain, placenta, lung, liver, skeletal muscle, kidney, and pancreas.

The protein resides in the cell membrane. Its subcellular location is the apical cell membrane. The enzyme catalyses biotin(out) + 2 Na(+)(out) = biotin(in) + 2 Na(+)(in). It catalyses the reaction (R)-pantothenate(out) + 2 Na(+)(out) = (R)-pantothenate(in) + 2 Na(+)(in). The catalysed reaction is (R)-lipoate(out) + 2 Na(+)(out) = (R)-lipoate(in) + 2 Na(+)(in). It carries out the reaction iodide(out) + 2 Na(+)(out) = iodide(in) + 2 Na(+)(in). In terms of biological role, sodium-dependent multivitamin transporter that mediates the electrogenic transport of pantothenate, biotin, lipoate and iodide. Functions as a Na(+)-coupled substrate symporter where the stoichiometry of Na(+):substrate is 2:1, creating an electrochemical Na(+) gradient used as driving force for substrate uptake. Required for biotin and pantothenate uptake in the intestine across the brush border membrane. Plays a role in the maintenance of intestinal mucosa integrity, by providing the gut mucosa with biotin. Contributes to the luminal uptake of biotin and pantothenate into the brain across the blood-brain barrier. The polypeptide is Sodium-dependent multivitamin transporter (Homo sapiens (Human)).